The following is a 311-amino-acid chain: Putative HTH-type transcriptional regulatory protein PTO0557 (311 aa).

The 55-residue stretch at 132 to 186 folds into the HTH cro/C1-type domain; the sequence is MRRIRELKGYSVGYLSSKLGISRRSISLYESGSSATIDIYLKLEETLGEDLTKDI. The H-T-H motif DNA-binding region spans 143–162; it reads VGYLSSKLGISRRSISLYES.

This chain is Putative HTH-type transcriptional regulatory protein PTO0557, found in Picrophilus torridus (strain ATCC 700027 / DSM 9790 / JCM 10055 / NBRC 100828 / KAW 2/3).